A 300-amino-acid polypeptide reads, in one-letter code: MAIAWMDSYTRWAADFRGEHLRSWMRDHTEVPAVAVVLYLILVLYVPENVMAHRNPIKLRFLNMLWNLLLTVFSICGAYYCLPRLWEVLTSPRISGLMADPNLGPNAPPPKLPGSFYNSACAWNDKIFFDGFVGLWVAAFVLSKIPEMIDTVFLVFQKKPVIFLHWYHHATVMLFCWHAYAYTISSGLWFATMNYCVHSIMYFYYFMCACGMRKVIRPIAPLITMMQILQMVAGTLIVLYTYVKKQFMGEFCAVNNPSLRMGLLMYVSYLFLFSQLYYRSYISPAAARTLRMANGEKKGK.

3 helical membrane-spanning segments follow: residues 31-51 (VPAV…ENVM), 61-81 (FLNM…AYYC), and 127-147 (IFFD…KIPE). Positions 165-169 (HWYHH) match the HxxHH motif motif. The Nucleophile role is filled by His168. Helical transmembrane passes span 170–190 (ATVM…GLWF), 192–212 (TMNY…ACGM), 219–239 (IAPL…LIVL), and 261–283 (MGLL…SYIS).

Belongs to the ELO family.

It localises to the endoplasmic reticulum membrane. The enzyme catalyses an acyl-CoA + malonyl-CoA + H(+) = a 3-oxoacyl-CoA + CO2 + CoA. The protein operates within lipid metabolism; fatty acid biosynthesis. Involved in the synthesis of fatty acids. Elongates C14 fatty acids to C18. Required for the maintenance of the global lipidome profile in this parasite. This Trypanosoma cruzi (strain CL Brener) protein is Fatty acid elongase 3.